A 365-amino-acid polypeptide reads, in one-letter code: MDIIETAKLEEHLENQPSDPTNTYTRPTEPVEEENKNGNGKPKSLSSGLRKGTKKYPDYIQIAMPTESRNKFPLEWWKTGIAFIYAVFNLVLTTVMITVVHERVPPKELSPPLPDKFFDYIDRVKWAFSVSEINGIILVGLWITQWLFLRYKSIVGRRFCFIIGTLYLYRCITMYVTTLPVPGMHFQCAPKLNGDSQAKVQRILRLISGGGLSITGSHILCGDFLFSGHTVTLTLTYLFIKEYSPRHFWWYHLICWLLSAAGIICILVAHEHYTVDVIIAYYITTRLFWWYHSMANEKNLKVSLQTNFLSRAWWFPIFYFFEKNVQGSIPCCFSWPLSWPPGCFKSSCKKYSRVQKIGEDNEKST.

The segment covering 1–14 (MDIIETAKLEEHLE) has biased composition (basic and acidic residues). Residues 1 to 52 (MDIIETAKLEEHLENQPSDPTNTYTRPTEPVEEENKNGNGKPKSLSSGLRKG) form a disordered region. Residues 15–26 (NQPSDPTNTYTR) are compositionally biased toward polar residues. 5 helical membrane passes run 80 to 100 (GIAF…ITVV), 128 to 148 (FSVS…QWLF), 159 to 179 (FCFI…VTTL), 218 to 240 (HILC…YLFI), and 248 to 268 (FWWY…CILV). H229 is a catalytic residue. Active-site residues include H272 and D276. Residues 273–290 (YTVDVIIAYYITTRLFWW) form a helical membrane-spanning segment. Topologically, residues 291 to 365 (YHSMANEKNL…KIGEDNEKST (75 aa)) are cytoplasmic. 4 S-palmitoyl cysteine lipidation sites follow: C331, C332, C343, and C348.

The protein belongs to the sphingomyelin synthase family. Palmitoylated on Cys-331, Cys-332, Cys-343 and Cys-348; which plays an important role in plasma membrane localization.

It localises to the cell membrane. Its subcellular location is the golgi apparatus membrane. It carries out the reaction an N-acylsphing-4-enine + a 1,2-diacyl-sn-glycero-3-phosphocholine = a sphingomyelin + a 1,2-diacyl-sn-glycerol. The catalysed reaction is an N-acylsphinganine + a 1,2-diacyl-sn-glycero-3-phosphocholine = an N-acylsphinganine-1-phosphocholine + a 1,2-diacyl-sn-glycerol. The enzyme catalyses an N-acyl-(4R)-4-hydroxysphinganine + a 1,2-diacyl-sn-glycero-3-phosphocholine = an N-acyl-(4R)-4-hydroxysphinganine-phosphocholine + a 1,2-diacyl-sn-glycerol. It catalyses the reaction an N-acylsphing-4-enine + a 1,2-diacyl-sn-glycero-3-phosphoethanolamine = an N-acylsphing-4-enine 1-phosphoethanolamine + a 1,2-diacyl-sn-glycerol. It carries out the reaction an N-acylsphinganine + a 1,2-diacyl-sn-glycero-3-phosphoethanolamine = an N-acylsphinganine-1-phosphoethanolamine + a 1,2-diacyl-sn-glycerol. The catalysed reaction is an N-acyl-(4R)-4-hydroxysphinganine + a 1,2-diacyl-sn-glycero-3-phosphoethanolamine = an N-acyl-(4R)-4-hydroxysphinganine-1-phosphoethanolamine + a 1,2-diacyl-sn-glycerol. The enzyme catalyses 1,2-dihexadecanoyl-sn-glycero-3-phosphocholine + an N-acylsphing-4-enine = 1,2-dihexadecanoyl-sn-glycerol + a sphingomyelin. It catalyses the reaction 1-(9Z-octadecenoyl)-2-acyl-sn-3-glycerol + a sphingomyelin = a 1-(9Z-octadecenoyl)-2-acyl-sn-glycero-3-phosphocholine + an N-acylsphing-4-enine. It carries out the reaction N-hexadecanoylsphinganine + a 1,2-diacyl-sn-glycero-3-phosphocholine = N-hexadecanoyl-sphinganine-1-phosphocholine + a 1,2-diacyl-sn-glycerol. The catalysed reaction is N-hexadecanoyl-(4R)-hydroxysphinganine + a 1,2-diacyl-sn-glycero-3-phosphocholine = N-hexadecanoyl-(4R)-hydroxysphinganine-phosphocholine + a 1,2-diacyl-sn-glycerol. The enzyme catalyses N-hexadecanoylsphinganine + a 1,2-diacyl-sn-glycero-3-phosphoethanolamine = N-hexadecanoyl-sphinganine-1-phosphoethanolamine + a 1,2-diacyl-sn-glycerol. It catalyses the reaction N-hexadecanoyl-(4R)-hydroxysphinganine + a 1,2-diacyl-sn-glycero-3-phosphoethanolamine = N-hexadecanoyl-(4R)-hydroxysphinganine-1-phosphoethanolamine + a 1,2-diacyl-sn-glycerol. The protein operates within sphingolipid metabolism. Functionally, sphingomyelin synthase that primarily contributes to sphingomyelin synthesis and homeostasis at the plasma membrane. Catalyzes the reversible transfer of phosphocholine moiety in sphingomyelin biosynthesis: in the forward reaction transfers phosphocholine head group of phosphatidylcholine (PC) on to ceramide (CER) to form ceramide phosphocholine (sphingomyelin, SM) and diacylglycerol (DAG) as by-product, and in the reverse reaction transfers phosphocholine from SM to DAG to form PC and CER. The direction of the reaction appears to depend on the levels of CER and DAG in the plasma membrane. Does not use free phosphorylcholine or CDP-choline as donors. Can also transfer phosphoethanolamine head group of phosphatidylethanolamine (PE) on to ceramide (CER) to form ceramide phosphoethanolamine (CPE). Regulates receptor-mediated signal transduction via mitogenic DAG and proapoptotic CER, as well as via SM, a structural component of membrane rafts that serve as platforms for signal transduction and protein sorting. To a lesser extent, plays a role in secretory transport via regulation of DAG pool at the Golgi apparatus and its downstream effects on PRKD1. Required for normal bone matrix mineralization. The protein is Phosphatidylcholine:ceramide cholinephosphotransferase 2 (SGMS2) of Macaca fascicularis (Crab-eating macaque).